We begin with the raw amino-acid sequence, 274 residues long: Penicillin-insensitive murein endopeptidase (274 aa).

Residues 1 to 19 form the signal peptide; sequence MNKTAIALLALLASSASLA. Intrachain disulfides connect C44-C265, C187-C235, and C216-C223. The Zn(2+) site is built by H110, H113, D120, D147, H150, and H211. A disordered region spans residues 228–265; that stretch reads LPPPGDGCGAELQSWFAPPKPGTTKPEKKTPPPLPPSC.

This sequence belongs to the peptidase M74 family. In terms of assembly, dimer. Zn(2+) is required as a cofactor.

It is found in the periplasm. Functionally, murein endopeptidase that cleaves the D-alanyl-meso-2,6-diamino-pimelyl amide bond that connects peptidoglycan strands. Likely plays a role in the removal of murein from the sacculus. This Shigella boydii serotype 18 (strain CDC 3083-94 / BS512) protein is Penicillin-insensitive murein endopeptidase.